Reading from the N-terminus, the 302-residue chain is Sulfate adenylyltransferase subunit 2 2 (302 aa).

This sequence belongs to the PAPS reductase family. CysD subfamily. As to quaternary structure, heterodimer composed of CysD, the smaller subunit, and CysN.

The enzyme catalyses sulfate + ATP + H(+) = adenosine 5'-phosphosulfate + diphosphate. The protein operates within sulfur metabolism; hydrogen sulfide biosynthesis; sulfite from sulfate: step 1/3. Functionally, with CysN forms the ATP sulfurylase (ATPS) that catalyzes the adenylation of sulfate producing adenosine 5'-phosphosulfate (APS) and diphosphate, the first enzymatic step in sulfur assimilation pathway. APS synthesis involves the formation of a high-energy phosphoric-sulfuric acid anhydride bond driven by GTP hydrolysis by CysN coupled to ATP hydrolysis by CysD. This Alkalilimnicola ehrlichii (strain ATCC BAA-1101 / DSM 17681 / MLHE-1) protein is Sulfate adenylyltransferase subunit 2 2.